We begin with the raw amino-acid sequence, 56 residues long: Large ribosomal subunit protein bL33 (56 aa).

Belongs to the bacterial ribosomal protein bL33 family.

This chain is Large ribosomal subunit protein bL33, found in Dichelobacter nodosus (strain VCS1703A).